The following is a 255-amino-acid chain: Triosephosphate isomerase (255 aa).

10 to 12 (NWK) is a substrate binding site. His-96 serves as the catalytic Electrophile. The active-site Proton acceptor is the Glu-168. Substrate is bound by residues Gly-174, Ser-213, and 234–235 (GG).

The protein belongs to the triosephosphate isomerase family. As to quaternary structure, homodimer.

It is found in the cytoplasm. It catalyses the reaction D-glyceraldehyde 3-phosphate = dihydroxyacetone phosphate. Its pathway is carbohydrate biosynthesis; gluconeogenesis. It functions in the pathway carbohydrate degradation; glycolysis; D-glyceraldehyde 3-phosphate from glycerone phosphate: step 1/1. Its function is as follows. Involved in the gluconeogenesis. Catalyzes stereospecifically the conversion of dihydroxyacetone phosphate (DHAP) to D-glyceraldehyde-3-phosphate (G3P). This Histophilus somni (strain 129Pt) (Haemophilus somnus) protein is Triosephosphate isomerase.